A 271-amino-acid polypeptide reads, in one-letter code: MGIVEEAHNLRVVGEGKRGVIVLAHGFGTDQSVWKHLVPHLVADYRVVLFDTMGAGPTNPDYFDFSRYATLEGYALDLLAILQELRVASCIYVGHSVSAVIGAIASISRPDLFSKLVLLSASPRYLNDVDYYGGFEQEDLDELFEAMGSNYKAWCSGFAPLCVGGDMESVAVQEFSRTLFNIRPDIALSVAQTIFQSDVRSLLPLVTVPCHIVQSTKDLAVPVVVSEYLHKHLGGDSIVEVMPSEGHLPQLSSPDIVIPVLLRHIQHDIAV.

Ser-96 (nucleophile) is an active-site residue. Residues Asp-218 and His-247 contribute to the active site.

Belongs to the AB hydrolase superfamily. Component of an intracellular receptor complex involved in the detection of the smoke compound karrikin. As to expression, expressed constitutively in all organs (e.g. roots, stems, leaves, panicles and embryos).

The protein localises to the nucleus. It localises to the cytoplasm. In terms of biological role, may be involved in strigolactone signaling pathway. Essential for plant responses to karrikins, a class of butenolide compounds, structurally similar to strigolactones, released from burning vegetation that stimulate seed germination and enhance seedling photomorphogenesis. Mediates a specific perception of karrikin. Required for the establishment of symbiosis with the arbuscular mycorrhizal fungi (AMF) Rhizophagus irregularis and Gigaspora rosea. Karrikin binding induces a conformational change. The protein is Probable esterase D14L (D14L) of Oryza sativa subsp. japonica (Rice).